The chain runs to 183 residues: Archaemetzincin (183 aa).

His-131 is a Zn(2+) binding site. Glu-132 serves as the catalytic Proton acceptor. Residues His-135, His-141, Cys-142, Cys-147, and Cys-166 each coordinate Zn(2+).

Belongs to the peptidase M54 family. Monomer. Zn(2+) serves as cofactor.

Its function is as follows. Probable zinc metalloprotease whose natural substrate is unknown. In Saccharolobus solfataricus (strain ATCC 35092 / DSM 1617 / JCM 11322 / P2) (Sulfolobus solfataricus), this protein is Archaemetzincin.